The following is a 261-amino-acid chain: DNA repair protein RecO (261 aa).

This sequence belongs to the RecO family.

Involved in DNA repair and RecF pathway recombination. The protein is DNA repair protein RecO of Gloeobacter violaceus (strain ATCC 29082 / PCC 7421).